The primary structure comprises 91 residues: MAKRTKKVGIVGKYGTRYGASLRKMAKKLEVAQHSRYTCSFCGKEAMKRKATGIWNCAKCHKVVAGGAYVYGTVTAATVRSTIRRLRDLKE.

Residues 39–60 (CSFCGKEAMKRKATGIWNCAKC) form a C4-type zinc finger.

Belongs to the eukaryotic ribosomal protein eL43 family.

The sequence is that of Large ribosomal subunit protein eL43 from Caenorhabditis elegans.